Reading from the N-terminus, the 1300-residue chain is Phospholipid-transporting ATPase IK (1300 aa).

Residues 1 to 11 (MGTGPAQTPRS) show a composition bias toward polar residues. The tract at residues 1 to 98 (MGTGPAQTPR…SLGQREDLQD (98 aa)) is disordered. Residues 1 to 149 (MGTGPAQTPR…TAKYNFYSFL (149 aa)) are Cytoplasmic-facing. Positions 65–74 (RRHKAQPGRA) are enriched in basic residues. Residues 150-171 (PLNLYEQFHRVSNLFFLIIIIL) form a helical membrane-spanning segment. At 172-177 (QSIPDI) the chain is on the exoplasmic loop side. The helical transmembrane segment at 178–197 (STLPWFSLSTPMVCLLFIRA) threads the bilayer. Residues 198-381 (TRDLVDDMGR…TKLDLLMNKL (184 aa)) are Cytoplasmic-facing. The chain crosses the membrane as a helical span at residues 382-403 (VVVIFISVVLVCLVLAFGFGFS). Residues 404 to 430 (VKEFKDHHYYLSGVHGSSVAAESFFVF) are Exoplasmic loop-facing. Residues 431 to 452 (WSFLILLSVTIPMSMFILSEFI) traverse the membrane as a helical segment. The Cytoplasmic portion of the chain corresponds to 453–995 (YLGNSVFIDW…GRWSYVRICK (543 aa)). D495 (4-aspartylphosphate intermediate) is an active-site residue. ATP contacts are provided by D495, K496, T497, E596, F637, K660, R693, T763, G764, D765, R913, and K919. D495 is a Mg(2+) binding site. Residue T497 coordinates Mg(2+). Mg(2+) is bound at residue D939. ATP contacts are provided by N942 and D943. Mg(2+) is bound at residue D943. Residues 996–1016 (FLRYFFYKSMASMMVQVWFAC) traverse the membrane as a helical segment. Residues 1017–1028 (YNGFTGQPLYEG) are Exoplasmic loop-facing. Residues 1029–1048 (WFLALFNLLYSTLPVLYIGL) traverse the membrane as a helical segment. At 1049–1078 (FEQDVSAEQSLEKPELYVVGQKDELFNYWV) the chain is on the cytoplasmic side. A helical transmembrane segment spans residues 1079–1100 (FVQAIAHGVTTSLVNFFMTLWI). At 1101-1112 (SRDTAGPASFSD) the chain is on the exoplasmic loop side. A helical transmembrane segment spans residues 1113-1135 (HQSFAVVVALSCLLSITMEVILI). Residues 1136–1141 (IKYWTA) are Cytoplasmic-facing. Residues 1142–1162 (LCVATILLSLGFYAIMTTTTQ) traverse the membrane as a helical segment. The Exoplasmic loop portion of the chain corresponds to 1163–1182 (SFWLFRVSPTTFPFLYADLS). A helical membrane pass occupies residues 1183 to 1207 (VMSSPSILLVVLLSVSINTFPVLAL). Topologically, residues 1208–1300 (RVIFPALKEL…EAASSPKESQ (93 aa)) are cytoplasmic. Positions 1272 to 1300 (RGPGVSSDIASESLDPSDEEAASSPKESQ) are disordered.

The protein belongs to the cation transport ATPase (P-type) (TC 3.A.3) family. Type IV subfamily. Mg(2+) serves as cofactor. In terms of tissue distribution, isoform 3 was only detected in testis.

Its subcellular location is the cytoplasmic vesicle. The protein resides in the secretory vesicle. The protein localises to the acrosome membrane. It is found in the endoplasmic reticulum membrane. It carries out the reaction ATP + H2O + phospholipidSide 1 = ADP + phosphate + phospholipidSide 2.. It catalyses the reaction a 1,2-diacyl-sn-glycero-3-phospho-L-serine(out) + ATP + H2O = a 1,2-diacyl-sn-glycero-3-phospho-L-serine(in) + ADP + phosphate + H(+). P4-ATPase flippase which catalyzes the hydrolysis of ATP coupled to the transport of aminophospholipids from the outer to the inner leaflet of various membranes and ensures the maintenance of asymmetric distribution of phospholipids. Phospholipid translocation also seems to be implicated in vesicle formation and in uptake of lipid signaling molecules. May be responsible for the maintenance of asymmetric distribution of phosphatidylserine (PS) in spermatozoa membranes. Involved in acrosome reactions and binding of spermatozoa to zona pellucida. This chain is Phospholipid-transporting ATPase IK, found in Homo sapiens (Human).